We begin with the raw amino-acid sequence, 751 residues long: Valine--tRNA ligase (751 aa).

ATP is bound at residue K520.

This sequence belongs to the class-I aminoacyl-tRNA synthetase family. ValS type 2 subfamily.

Its subcellular location is the cytoplasm. It carries out the reaction tRNA(Val) + L-valine + ATP = L-valyl-tRNA(Val) + AMP + diphosphate. Catalyzes the attachment of valine to tRNA(Val). As ValRS can inadvertently accommodate and process structurally similar amino acids such as threonine, to avoid such errors, it has a 'posttransfer' editing activity that hydrolyzes mischarged Thr-tRNA(Val) in a tRNA-dependent manner. The chain is Valine--tRNA ligase (valS) from Nanoarchaeum equitans (strain Kin4-M).